A 715-amino-acid polypeptide reads, in one-letter code: Elongation factor G (715 aa).

The tr-type G domain maps to 8-290 (NRYRNIGICA…AVIDFLPAPT (283 aa)). Residues 17 to 24 (AHVDAGKT), 88 to 92 (DTPGH), and 142 to 145 (NKMD) each bind GTP.

Belongs to the TRAFAC class translation factor GTPase superfamily. Classic translation factor GTPase family. EF-G/EF-2 subfamily.

It localises to the cytoplasm. Functionally, catalyzes the GTP-dependent ribosomal translocation step during translation elongation. During this step, the ribosome changes from the pre-translocational (PRE) to the post-translocational (POST) state as the newly formed A-site-bound peptidyl-tRNA and P-site-bound deacylated tRNA move to the P and E sites, respectively. Catalyzes the coordinated movement of the two tRNA molecules, the mRNA and conformational changes in the ribosome. The chain is Elongation factor G from Pseudomonas fluorescens (strain ATCC BAA-477 / NRRL B-23932 / Pf-5).